We begin with the raw amino-acid sequence, 607 residues long: Thymidine kinase (607 aa).

2 disordered regions span residues 1–160 (MAGF…ADST) and 180–215 (DDKS…PSGL). The segment covering 17 to 32 (KCQEDESPENERHENF) has biased composition (basic and acidic residues). Composition is skewed to polar residues over residues 88-106 (AAVT…TSCP), 148-160 (RKTS…ADST), and 194-203 (RRPSSHSALK). Residue 291 to 298 (GAPGVGKT) participates in ATP binding. Residue Glu-317 is the Proton acceptor of the active site. Residue Gln-355 coordinates substrate. Arg-445 contributes to the ATP binding site. Arg-451 is a substrate binding site.

The protein belongs to the herpesviridae thymidine kinase family. Homodimer.

It is found in the virion tegument. The protein resides in the host nucleus. The enzyme catalyses thymidine + ATP = dTMP + ADP + H(+). In terms of biological role, catalyzes the transfer of the gamma-phospho group of ATP to thymidine to generate dTMP in the salvage pathway of pyrimidine synthesis. The dTMP serves as a substrate for DNA polymerase during viral DNA replication. Allows the virus to be reactivated and to grow in non-proliferative cells lacking a high concentration of phosphorylated nucleic acid precursors. This Epstein-Barr virus (strain AG876) (HHV-4) protein is Thymidine kinase.